The primary structure comprises 397 residues: Fractalkine (397 aa).

An N-terminal signal peptide occupies residues 1–24 (MAPISLSWLLRLATFCHLTVLLAG). The chemokine and involved in interaction with ITGAV:ITGB3 and ITGA4:ITGB1 stretch occupies residues 25 to 100 (QHHGVTKCNI…RQAAALTRNG (76 aa)). The Extracellular portion of the chain corresponds to 25 to 341 (QHHGVTKCNI…PDAQAATRRQ (317 aa)). Cystine bridges form between Cys-32-Cys-58 and Cys-36-Cys-74. N-linked (GlcNAc...) asparagine glycosylation is present at Asn-33. The segment at 101–341 (GTFEKQIGEV…PDAQAATRRQ (241 aa)) is mucin-like stalk. Disordered stretches follow at residues 128–265 (EPEA…REEM) and 289–309 (VPVS…SWTP). Over residues 133–147 (GESSSLEPTPSSQEA) the composition is skewed to polar residues. The O-linked (GalNAc...) threonine glycan is linked to Thr-183. The span at 193–202 (TAATWQSSAP) shows a compositional bias: polar residues. Over residues 219–243 (PSTQDPSTQASTASSPAPEENAPSE) the composition is skewed to low complexity. The O-linked (GalNAc...) serine glycan is linked to Ser-253. O-linked (GalNAc...) threonine glycosylation occurs at Thr-329. A helical transmembrane segment spans residues 342-362 (AVGLLAFLGLLFCLGVAMFTY). Residues 363–397 (QSLQGCPRKMAGEMAEGLRYIPRSCGSNSYVLVPV) are Cytoplasmic-facing.

The protein belongs to the intercrine delta family. As to quaternary structure, monomer. Forms a ternary complex with CX3CR1 and ITGAV:ITGB3 or ITGA4:ITGB1. (Microbial infection) Interacts with pox virus crmD; this inhibits cell migration mediated by CX3CL1. In terms of assembly, (Microbial infection) Interacts (via N-terminus) with human cytomegalovirus (HHV-5) US28. As to quaternary structure, (Microbial infection) Interacts with P.falciparum (strain 3D7) CBP1 and CBP2 (via their extracellular domains); the interaction mediates the adhesion of infected erythrocytes with endothelial cells. In terms of processing, a soluble short 95 kDa form may be released by proteolytic cleavage from the long membrane-anchored form. O-glycosylated with core 1 or possibly core 8 glycans. Expressed in the seminal plasma, endometrial fluid and follicular fluid (at protein level). Small intestine, colon, testis, prostate, heart, brain, lung, skeletal muscle, kidney and pancreas. Most abundant in the brain and heart.

Its subcellular location is the cell membrane. It localises to the secreted. Functionally, chemokine that acts as a ligand for both CX3CR1 and integrins ITGAV:ITGB3 and ITGA4:ITGB1. The CX3CR1-CX3CL1 signaling exerts distinct functions in different tissue compartments, such as immune response, inflammation, cell adhesion and chemotaxis. Regulates leukocyte adhesion and migration processes at the endothelium. Can activate integrins in both a CX3CR1-dependent and CX3CR1-independent manner. In the presence of CX3CR1, activates integrins by binding to the classical ligand-binding site (site 1) in integrins. In the absence of CX3CR1, binds to a second site (site 2) in integrins which is distinct from site 1 and enhances the binding of other integrin ligands to site 1. In terms of biological role, the soluble form is chemotactic for T-cells and monocytes, but not for neutrophils. Its function is as follows. The membrane-bound form promotes adhesion of those leukocytes to endothelial cells. (Microbial infection) Mediates the cytoadherence of erythrocytes infected with parasite P.falciparum (strain 3D7) with endothelial cells by interacting with P.falciparum CBP1 and CBP2 expressed at the surface of erythrocytes. The adhesion prevents the elimination of infected erythrocytes by the spleen. In Homo sapiens (Human), this protein is Fractalkine.